The primary structure comprises 401 residues: NADH-quinone oxidoreductase subunit D (401 aa).

Belongs to the complex I 49 kDa subunit family. In terms of assembly, NDH-1 is composed of 14 different subunits. Subunits NuoB, C, D, E, F, and G constitute the peripheral sector of the complex.

The protein localises to the cell inner membrane. It carries out the reaction a quinone + NADH + 5 H(+)(in) = a quinol + NAD(+) + 4 H(+)(out). Its function is as follows. NDH-1 shuttles electrons from NADH, via FMN and iron-sulfur (Fe-S) centers, to quinones in the respiratory chain. The immediate electron acceptor for the enzyme in this species is believed to be ubiquinone. Couples the redox reaction to proton translocation (for every two electrons transferred, four hydrogen ions are translocated across the cytoplasmic membrane), and thus conserves the redox energy in a proton gradient. The protein is NADH-quinone oxidoreductase subunit D of Rhodopseudomonas palustris (strain HaA2).